A 545-amino-acid chain; its full sequence is Propane 2-monooxygenase, hydroxylase component large subunit (545 aa).

Residues E97, E127, H130, E192, E226, and H229 each coordinate Fe cation.

It belongs to the TmoA/XamoA family. In terms of assembly, the propane 2-monooxygenase multicomponent enzyme system is composed of an electron transfer component and a monooxygenase component interacting with the effector protein PrmD. The electron transfer component is composed of a reductase (PrmB), and the monooxygenase component is formed by a large subunit (PrmA) and a small subunit (PrmC). Probably requires the presence of the chaperonin-like protein PrmG to ensure a productive folding, resulting of a soluble PrmA, which leads to the active form of PrmABCD. Fe(2+) is required as a cofactor.

It carries out the reaction propane + NADH + O2 + H(+) = propan-2-ol + NAD(+) + H2O. It catalyses the reaction phenol + NADH + O2 + H(+) = hydroquinone + NAD(+) + H2O. In terms of biological role, component of the propane 2-monooxygenase multicomponent enzyme system which is involved in the degradation of propane via the O2-dependent hydroxylation of propane. Under acetone induction, also able to catalyze the oxidation of phenol to yield hydroquinone. In Gordonia sp. (strain TY-5), this protein is Propane 2-monooxygenase, hydroxylase component large subunit.